The following is a 218-amino-acid chain: 25 kDa calcium-binding protein (218 aa).

EF-hand domains follow at residues 24–59, 66–101, 128–163, and 171–206; these read GAKTVARRIFENYDKGRKGRIENTDCVPMITEAYKS, PSSDDIKAYHRVLDRNGDGIVTYQDIEELCIRYLTG, AKLDVARRLFKRYDKDGSGQLQDDEIAGLLKDTYAE, and PTKEDVKIWLQMADTNSDGSVSLEEYEDLIIKSLQK. Positions 37, 43, 48, 79, 81, 83, 90, 141, 143, 145, 147, 152, 184, 186, 188, 190, and 195 each coordinate Ca(2+).

Its function is as follows. Expected to play a crucial role in calcium-dependent regulation of ciliary movement. This Tetrahymena thermophila protein is 25 kDa calcium-binding protein.